We begin with the raw amino-acid sequence, 1430 residues long: rRNA biogenesis protein RRP5 (1430 aa).

S1 motif domains follow at residues 74–160 (DMLV…LSLK), 176–238 (GFIF…CTCV), 261–329 (GSIV…LTLN), 447–511 (GDLV…VSNR), 531–592 (GNVY…LTLP), and 697–771 (QVGD…VSAK). The disordered stretch occupies residues 1041 to 1145 (KITNGQKKTQ…AKEKAKAEIK (105 aa)). Polar residues predominate over residues 1043–1053 (TNGQKKTQPLT). 2 stretches are compositionally biased toward basic and acidic residues: residues 1057-1082 (VKEKPKQNGKLFFEDKTPAKNAKSET) and 1135-1145 (SAKEKAKAEIK). The stretch at 1119–1157 (LNVAETQKNAAKKKRLSAKEKAKAEIKEEQRLREIEERN) forms a coiled coil. HAT repeat units follow at residues 1161–1193 (KARLETIDQYERLVIAQPNNSISWLKYIAFLLS), 1195–1232 (TEIEKARALARRAISTISFRETQELRNMWSALLNMELV), 1265–1297 (KRKDRLSSVLTTVLNKFKTELRVWPVAAEAYFW), 1299–1333 (GKSDQVHNLLQRALRALPNQEHIPCIVSFAKLYAK), 1335–1367 (DNNDMAQTLLDDVVTSYPKRIDIWSVYVDMLIK), and 1369–1404 (GLIDSARNVLERAVVQKLKPNKMQVIYKKYLQLEEN).

The protein resides in the nucleus. It is found in the nucleolus. Functionally, involved in rRNA processing or maturation during ribosome biogenesis. This Drosophila melanogaster (Fruit fly) protein is rRNA biogenesis protein RRP5.